The chain runs to 216 residues: Probable ubiquitin-conjugating enzyme E2 ECU01_1010 (216 aa).

Residues 1-10 show a composition bias toward basic residues; it reads MFKPSAHRRL. The segment at 1–29 is disordered; it reads MFKPSAHRRLPREDDIIQEDDEDGPLWPS. The UBC core domain occupies 29-196; sequence SALRRLSNEE…VIRIAREEDE (168 aa). The Glycyl thioester intermediate role is filled by Cys120.

Belongs to the ubiquitin-conjugating enzyme family.

It catalyses the reaction S-ubiquitinyl-[E1 ubiquitin-activating enzyme]-L-cysteine + [E2 ubiquitin-conjugating enzyme]-L-cysteine = [E1 ubiquitin-activating enzyme]-L-cysteine + S-ubiquitinyl-[E2 ubiquitin-conjugating enzyme]-L-cysteine.. The protein operates within protein modification; protein ubiquitination. Functionally, catalyzes the covalent attachment of ubiquitin to other proteins so as to signal them for selective protein degradation. Involved in the formation of multiubiquitin chains. The protein is Probable ubiquitin-conjugating enzyme E2 ECU01_1010 of Encephalitozoon cuniculi (strain GB-M1) (Microsporidian parasite).